The sequence spans 136 residues: Protein NrdI (136 aa).

The protein belongs to the NrdI family.

In terms of biological role, probably involved in ribonucleotide reductase function. The protein is Protein NrdI of Enterobacter sp. (strain 638).